Consider the following 103-residue polypeptide: Large ribosomal subunit protein bL21 (103 aa).

This sequence belongs to the bacterial ribosomal protein bL21 family. In terms of assembly, part of the 50S ribosomal subunit. Contacts protein L20.

In terms of biological role, this protein binds to 23S rRNA in the presence of protein L20. The chain is Large ribosomal subunit protein bL21 from Histophilus somni (strain 129Pt) (Haemophilus somnus).